We begin with the raw amino-acid sequence, 505 residues long: NADH-quinone oxidoreductase subunit N 1 (505 aa).

14 helical membrane-spanning segments follow: residues 18 to 38 (LIPE…EMVL), 45 to 65 (LIAT…AWDF), 84 to 104 (YVGQ…SILA), 116 to 136 (IEFY…AQAN), 138 to 158 (FVLF…LVSY), 173 to 193 (LIMG…LYGV), 223 to 243 (FLAA…IGAF), 271 to 291 (AGFA…WWLV), 292 to 312 (QPVL…AALT), 319 to 339 (LIGL…IASH), 345 to 365 (VGAV…VFGV), 391 to 411 (FLAA…PLAG), 429 to 449 (GLLA…FGWI), and 473 to 493 (VGAA…LFGV).

The protein belongs to the complex I subunit 2 family. In terms of assembly, NDH-1 is composed of 14 different subunits. Subunits NuoA, H, J, K, L, M, N constitute the membrane sector of the complex.

It is found in the cell inner membrane. It carries out the reaction a quinone + NADH + 5 H(+)(in) = a quinol + NAD(+) + 4 H(+)(out). In terms of biological role, NDH-1 shuttles electrons from NADH, via FMN and iron-sulfur (Fe-S) centers, to quinones in the respiratory chain. The immediate electron acceptor for the enzyme in this species is believed to be ubiquinone. Couples the redox reaction to proton translocation (for every two electrons transferred, four hydrogen ions are translocated across the cytoplasmic membrane), and thus conserves the redox energy in a proton gradient. This is NADH-quinone oxidoreductase subunit N 1 from Opitutus terrae (strain DSM 11246 / JCM 15787 / PB90-1).